The following is a 63-amino-acid chain: ATP synthase F(0) complex subunit 8 (63 aa).

Residues 8 to 24 traverse the membrane as a helical segment; the sequence is MWLLTILSMLLTLFVLF. Residue Lys57 is modified to N6-acetyllysine.

Belongs to the ATPase protein 8 family. Component of the ATP synthase complex composed at least of ATP5F1A/subunit alpha, ATP5F1B/subunit beta, ATP5MC1/subunit c (homooctomer), MT-ATP6/subunit a, MT-ATP8/subunit 8, ATP5ME/subunit e, ATP5MF/subunit f, ATP5MG/subunit g, ATP5MK/subunit k, ATP5MJ/subunit j, ATP5F1C/subunit gamma, ATP5F1D/subunit delta, ATP5F1E/subunit epsilon, ATP5PF/subunit F6, ATP5PB/subunit b, ATP5PD/subunit d, ATP5PO/subunit OSCP. ATP synthase complex consists of a soluble F(1) head domain (subunits alpha(3) and beta(3)) - the catalytic core - and a membrane F(0) domain - the membrane proton channel (subunits c, a, 8, e, f, g, k and j). These two domains are linked by a central stalk (subunits gamma, delta, and epsilon) rotating inside the F1 region and a stationary peripheral stalk (subunits F6, b, d, and OSCP). Interacts with PRICKLE3.

The protein resides in the mitochondrion membrane. In terms of biological role, subunit 8, of the mitochondrial membrane ATP synthase complex (F(1)F(0) ATP synthase or Complex V) that produces ATP from ADP in the presence of a proton gradient across the membrane which is generated by electron transport complexes of the respiratory chain. ATP synthase complex consist of a soluble F(1) head domain - the catalytic core - and a membrane F(1) domain - the membrane proton channel. These two domains are linked by a central stalk rotating inside the F(1) region and a stationary peripheral stalk. During catalysis, ATP synthesis in the catalytic domain of F(1) is coupled via a rotary mechanism of the central stalk subunits to proton translocation. In vivo, can only synthesize ATP although its ATP hydrolase activity can be activated artificially in vitro. Part of the complex F(0) domain. This chain is ATP synthase F(0) complex subunit 8, found in Balaenoptera physalus (Fin whale).